A 206-amino-acid polypeptide reads, in one-letter code: Threonine efflux protein (206 aa).

Residues 1 to 21 form a helical membrane-spanning segment; that stretch reads MMMLFFTVAMVHIVALMSPGP. Residues 22-43 are Periplasmic-facing; that stretch reads DFFFVSQTAVSRSRKEAMMGVL. A helical transmembrane segment spans residues 44–64; that stretch reads GITCGVMVWAGVALLGLHLII. Residues 65 to 66 lie on the Cytoplasmic side of the membrane; it reads EK. Residues 67-87 traverse the membrane as a helical segment; sequence MAWLHTIIMVGGGLYLCWMGY. Residues 88–149 are Periplasmic-facing; the sequence is QMLRGALKKQ…VGDNVGAAAR (62 aa). Residues 150-173 traverse the membrane as a helical segment; sequence WGIFALITLETLAWFTVVASLFAL. Over 174–206 the chain is Cytoplasmic; it reads PKMRRGYQRLAKWIDGFAGALFAGFGIHLIISR.

The protein belongs to the Rht family.

It localises to the cell inner membrane. Functionally, conducts the efflux of threonine. This is Threonine efflux protein (rhtC) from Salmonella typhimurium (strain LT2 / SGSC1412 / ATCC 700720).